Here is a 384-residue protein sequence, read N- to C-terminus: NADP-dependent alcohol dehydrogenase 3 (384 aa).

This sequence belongs to the iron-containing alcohol dehydrogenase family.

It carries out the reaction a primary alcohol + NADP(+) = an aldehyde + NADPH + H(+). Has NADP-dependent alcohol dehydrogenase activity. In Entamoeba histolytica (strain ATCC 30459 / HM-1:IMSS / ABRM), this protein is NADP-dependent alcohol dehydrogenase 3.